The following is a 529-amino-acid chain: Glycylpeptide N-tetradecanoyltransferase 2 (529 aa).

The segment at 1–82 is disordered; sequence MAEDSESAAS…QEIKIQQSSK (82 aa). Positions 15 to 32 are enriched in acidic residues; that stretch reads ELDDQDTCGIDGDNEEET. Ser-38 is subject to Phosphoserine. A compositionally biased stretch (basic residues) spans 46–57; the sequence is KKKKKKQKRKKE. Positions 61–82 are enriched in polar residues; that stretch reads SGGTKSDSASDSQEIKIQQSSK. Tetradecanoyl-CoA-binding residues include Trp-153, Leu-281, Val-283, Ser-289, Arg-291, Val-292, and Ala-293.

This sequence belongs to the NMT family.

It localises to the cytoplasm. It is found in the membrane. It carries out the reaction N-terminal glycyl-[protein] + tetradecanoyl-CoA = N-tetradecanoylglycyl-[protein] + CoA + H(+). The enzyme catalyses N-terminal glycyl-L-lysyl-[protein] + tetradecanoyl-CoA = N-terminal glycyl-(N(6)-tetradecanoyl)-L-lysyl-[protein] + CoA + H(+). Adds a myristoyl group to the N-terminal glycine residue of certain cellular and viral proteins. Also able to mediate N-terminal lysine myristoylation of proteins: catalyzes myristoylation of ARF6 on both 'Gly-2' and 'Lys-3'. Lysine myristoylation is required to maintain ARF6 on membranes during the GTPase cycle. This Mus musculus (Mouse) protein is Glycylpeptide N-tetradecanoyltransferase 2 (Nmt2).